We begin with the raw amino-acid sequence, 58 residues long: Ribosome modulation factor (58 aa).

The protein belongs to the ribosome modulation factor family.

It is found in the cytoplasm. In terms of biological role, during stationary phase, converts 70S ribosomes to an inactive dimeric form (100S ribosomes). The chain is Ribosome modulation factor from Shewanella amazonensis (strain ATCC BAA-1098 / SB2B).